Here is a 118-residue protein sequence, read N- to C-terminus: MAKKDELGRRGESVAAHWLEAHGYVLIGRNWRIRSGEIDIIARTGNITVFVEVKTRATTHYGHPLEAITPEKAARLRRLTAEWCRTYGPLPGALRVDAIGVLNAWSANPEIHHLPGIV.

Belongs to the UPF0102 family.

This chain is UPF0102 protein Lxx14785, found in Leifsonia xyli subsp. xyli (strain CTCB07).